Reading from the N-terminus, the 530-residue chain is Autoinducer-2 kinase (530 aa).

This sequence belongs to the FGGY kinase family.

It localises to the cytoplasm. It carries out the reaction (S)-4,5-dihydroxypentane-2,3-dione + ATP = (2S)-2-hydroxy-3,4-dioxopentyl phosphate + ADP + H(+). Functionally, catalyzes the phosphorylation of autoinducer-2 (AI-2) to phospho-AI-2, which subsequently inactivates the transcriptional regulator LsrR and leads to the transcription of the lsr operon. Phosphorylates the ring-open form of (S)-4,5-dihydroxypentane-2,3-dione (DPD), which is the precursor to all AI-2 signaling molecules, at the C5 position. The polypeptide is Autoinducer-2 kinase (Salmonella choleraesuis (strain SC-B67)).